A 101-amino-acid polypeptide reads, in one-letter code: Osteocalcin (101 aa).

Positions 1–18 are cleaved as a signal peptide; that stretch reads MKLAIVLLLLGLAVLCLG. The propeptide occupies 19–52; the sequence is GKDSQHSASAGDSRSSEAFISRQDSANFARRHKR. The 47-residue stretch at 53–99 folds into the Gla domain; the sequence is SYRYNVARGAAVTSPLESQREVCELNPDCDELADHIGFQEAYRRFYG. Glu69, Glu73, Glu76, and Asp82 together coordinate Ca(2+). Glu69, Glu73, and Glu76 each carry 4-carboxyglutamate. Cys75 and Cys81 are disulfide-bonded.

This sequence belongs to the osteocalcin/matrix Gla protein family. In terms of processing, gamma-carboxyglutamate residues are formed by vitamin K dependent carboxylation by GGCX. These residues are essential for the binding of calcium.

The protein localises to the secreted. Functionally, the carboxylated form is one of the main organic components of the bone matrix, which constitutes 1-2% of the total bone protein. The carboxylated form binds strongly to apatite and calcium. This Xenopus tropicalis (Western clawed frog) protein is Osteocalcin (bglap).